Consider the following 288-residue polypeptide: Polyamine aminopropyltransferase (288 aa).

A PABS domain is found at 9–238; it reads ETLHDQFGQY…GIMTFAWATD (230 aa). Gln33 lines the S-methyl-5'-thioadenosine pocket. Spermidine contacts are provided by His64 and Asp88. S-methyl-5'-thioadenosine contacts are provided by residues Glu108 and 140 to 141; that span reads DG. Asp158 (proton acceptor) is an active-site residue. 158–161 is a spermidine binding site; that stretch reads DCTD. S-methyl-5'-thioadenosine is bound at residue Pro165.

This sequence belongs to the spermidine/spermine synthase family. Homodimer or homotetramer.

It is found in the cytoplasm. The enzyme catalyses S-adenosyl 3-(methylsulfanyl)propylamine + putrescine = S-methyl-5'-thioadenosine + spermidine + H(+). It participates in amine and polyamine biosynthesis; spermidine biosynthesis; spermidine from putrescine: step 1/1. Its function is as follows. Catalyzes the irreversible transfer of a propylamine group from the amino donor S-adenosylmethioninamine (decarboxy-AdoMet) to putrescine (1,4-diaminobutane) to yield spermidine. The chain is Polyamine aminopropyltransferase from Shigella dysenteriae serotype 1 (strain Sd197).